Here is a 611-residue protein sequence, read N- to C-terminus: Dihydroxy-acid dehydratase (611 aa).

A Mg(2+)-binding site is contributed by Asp-81. Residue Cys-122 coordinates [2Fe-2S] cluster. 2 residues coordinate Mg(2+): Asp-123 and Lys-124. Lys-124 carries the post-translational modification N6-carboxylysine. Cys-195 contacts [2Fe-2S] cluster. Glu-491 contributes to the Mg(2+) binding site. Ser-517 (proton acceptor) is an active-site residue.

This sequence belongs to the IlvD/Edd family. Homodimer. It depends on [2Fe-2S] cluster as a cofactor. Mg(2+) is required as a cofactor.

The enzyme catalyses (2R)-2,3-dihydroxy-3-methylbutanoate = 3-methyl-2-oxobutanoate + H2O. The catalysed reaction is (2R,3R)-2,3-dihydroxy-3-methylpentanoate = (S)-3-methyl-2-oxopentanoate + H2O. It participates in amino-acid biosynthesis; L-isoleucine biosynthesis; L-isoleucine from 2-oxobutanoate: step 3/4. It functions in the pathway amino-acid biosynthesis; L-valine biosynthesis; L-valine from pyruvate: step 3/4. In terms of biological role, functions in the biosynthesis of branched-chain amino acids. Catalyzes the dehydration of (2R,3R)-2,3-dihydroxy-3-methylpentanoate (2,3-dihydroxy-3-methylvalerate) into 2-oxo-3-methylpentanoate (2-oxo-3-methylvalerate) and of (2R)-2,3-dihydroxy-3-methylbutanoate (2,3-dihydroxyisovalerate) into 2-oxo-3-methylbutanoate (2-oxoisovalerate), the penultimate precursor to L-isoleucine and L-valine, respectively. This is Dihydroxy-acid dehydratase from Allorhizobium ampelinum (strain ATCC BAA-846 / DSM 112012 / S4) (Agrobacterium vitis (strain S4)).